The chain runs to 506 residues: Glutamate--tRNA ligase (506 aa).

Residues 14–24 carry the 'HIGH' region motif; sequence PSPTGYLHIGG. A 'KMSKS' region motif is present at residues 261-265; sequence KLSKR. An ATP-binding site is contributed by Lys-264.

Belongs to the class-I aminoacyl-tRNA synthetase family. Glutamate--tRNA ligase type 1 subfamily. Monomer.

The protein resides in the cytoplasm. The catalysed reaction is tRNA(Glu) + L-glutamate + ATP = L-glutamyl-tRNA(Glu) + AMP + diphosphate. Functionally, catalyzes the attachment of glutamate to tRNA(Glu) in a two-step reaction: glutamate is first activated by ATP to form Glu-AMP and then transferred to the acceptor end of tRNA(Glu). The chain is Glutamate--tRNA ligase from Roseiflexus sp. (strain RS-1).